The primary structure comprises 242 residues: AA9 family lytic polysaccharide monooxygenase F (242 aa).

A signal peptide spans 1 to 20 (MVQFKLSTASLLALASYAAA). His21 serves as a coordination point for Cu(2+). The disordered stretch occupies residues 31–53 (GQTYPGADPHNPNPESPGWQAEN). 2 cysteine pairs are disulfide-bonded: Cys71–Cys192 and Cys112–Cys116. A Cu(2+)-binding site is contributed by His101. Residues His178 and Gln187 each coordinate O2. Tyr189 contacts Cu(2+).

The protein belongs to the polysaccharide monooxygenase AA9 family. Requires Cu(2+) as cofactor.

Its subcellular location is the secreted. It catalyses the reaction [(1-&gt;4)-beta-D-glucosyl]n+m + reduced acceptor + O2 = 4-dehydro-beta-D-glucosyl-[(1-&gt;4)-beta-D-glucosyl]n-1 + [(1-&gt;4)-beta-D-glucosyl]m + acceptor + H2O.. Its function is as follows. Lytic polysaccharide monooxygenase (LPMO) that depolymerizes crystalline and amorphous polysaccharides via the oxidation of scissile alpha- or beta-(1-4)-glycosidic bonds, yielding C1 or C4 oxidation products. Catalysis by LPMOs requires the reduction of the active-site copper from Cu(II) to Cu(I) by a reducing agent and H(2)O(2) or O(2) as a cosubstrate. Active on hemicelluloses, including xylan, glucomannan, and xyloglucan. Shows clear activity on cellooligosaccharides, generating C4 oxidation products. Has no activity on ivory nut mannan (INM), a linear beta-1,4-linked mannan without substitutions. The polypeptide is AA9 family lytic polysaccharide monooxygenase F (Malbranchea cinnamomea (Thermophilic fungus)).